The sequence spans 825 residues: Phenylalanine--tRNA ligase beta subunit (825 aa).

The region spanning 39-154 (RSWAEGVVLG…KAHPLGSDAR (116 aa)) is the tRNA-binding domain. The B5 domain maps to 411–506 (PLERTLKLRL…RLYGYDRFSE (96 aa)). Mg(2+)-binding residues include Asp484, Asp490, Glu493, and Glu494. An FDX-ACB domain is found at 731–824 (SPFPASDRDI…LEKHFPVTLR (94 aa)).

Belongs to the phenylalanyl-tRNA synthetase beta subunit family. Type 1 subfamily. As to quaternary structure, tetramer of two alpha and two beta subunits. Requires Mg(2+) as cofactor.

It localises to the cytoplasm. The catalysed reaction is tRNA(Phe) + L-phenylalanine + ATP = L-phenylalanyl-tRNA(Phe) + AMP + diphosphate + H(+). This is Phenylalanine--tRNA ligase beta subunit from Synechococcus sp. (strain JA-3-3Ab) (Cyanobacteria bacterium Yellowstone A-Prime).